The primary structure comprises 204 residues: Somatotropin (204 aa).

A signal peptide spans 1 to 17; the sequence is MDRAILLLSVVCLVVSS. Q18 carries the pyrrolidone carboxylic acid modification. H36 lines the Zn(2+) pocket. C69 and C177 are disulfide-bonded. Residue E186 coordinates Zn(2+). A disulfide bond links C194 and C202.

The protein belongs to the somatotropin/prolactin family.

It is found in the secreted. In terms of biological role, growth hormone plays an important role in growth control and is involved in the regulation of several anabolic processes. Implicated as an osmoregulatory substance important for seawater adaptation. In Odontesthes argentinensis (Marine silverside), this protein is Somatotropin (gh).